A 34-amino-acid polypeptide reads, in one-letter code: Trypsin inhibitor 1 (34 aa).

The cyclopeptide (Ser-Gly) cross-link spans 1–34 (SGSDGGVCPKILQRCRRDSDCPGACICRGNGYCG). 3 disulfide bridges follow: cysteine 8-cysteine 25, cysteine 15-cysteine 27, and cysteine 21-cysteine 33.

This is a cyclic peptide.

The protein resides in the secreted. In terms of biological role, inhibits trypsin; probably participates in a plant defense mechanism. The polypeptide is Trypsin inhibitor 1 (Momordica cochinchinensis (Spiny bitter cucumber)).